Consider the following 468-residue polypeptide: UDP-glucosyl transferase 74CD1 (468 aa).

A UDP-alpha-D-glucose-binding site is contributed by G20. Catalysis depends on H21, which acts as the Proton acceptor. The Charge relay role is filled by D114. The UDP-alpha-D-glucose site is built by S292, W344, Q347, H362, W365, N366, S367, E370, D386, and Q387.

It belongs to the UDP-glycosyltransferase family. In terms of tissue distribution, mainly expressed in flowers, flower buds and young leaves, and, to a lesser extent, in old leaves, stems and roots.

The protein operates within secondary metabolite biosynthesis; terpenoid biosynthesis. Functionally, component of the oleanane-type triterpene saponins (e.g. saponarioside A and saponarioside B) biosynthetic pathway, leading to the production of natural products with detergent properties used as traditional sources of soap. A glycosyltransferase that, together with SDR1, mediates the conversion of QA-tri to QA-triF; UGT74CD1 may transfer 4-keto-6-deoxy-glucose to QA-tri, which is in turn reduced to D-fucose by SDR1, thus leading to QA-triF formation via the initiation of the C-28 sugar chain. The chain is UDP-glucosyl transferase 74CD1 from Saponaria officinalis (Common soapwort).